We begin with the raw amino-acid sequence, 107 residues long: Metallothionein-1 (107 aa).

Positions 1–2 are excised as a propeptide; it reads MD.

This sequence belongs to the metallothionein superfamily. Type 7 family.

Functionally, the metallothioneins are involved in the cellular sequestration of toxic metal ions. Binds 12 cadmium ions per molecule. The chain is Metallothionein-1 from Tetrahymena pyriformis.